A 263-amino-acid chain; its full sequence is MLIEQITQALTAVRQQKPLVVNITNYVVMNNTANALLAIGASPIMAHSKQEMAEMMSFAGALVINIGTLDSVWTPRMSYAVEQANSNGKIVVLDPVGCGASSLRTETSREIARLANKLIIRGNASEIIALAGEQAQSKGVDALDSSDAALGAAHFLVKEYGASVVISGETDYIVTKEQTVQLNNGHEMMPYVTGMGCTLTALTGAFAAIGDETGLAAAAVLGVVGEIAAEQARGPGSLQMHLLDELYQLDEETLATRLKLQVR.

Substrate is bound at residue M45. R121 and S167 together coordinate ATP. Residue G194 coordinates substrate.

This sequence belongs to the Thz kinase family. Mg(2+) serves as cofactor.

The catalysed reaction is 5-(2-hydroxyethyl)-4-methylthiazole + ATP = 4-methyl-5-(2-phosphooxyethyl)-thiazole + ADP + H(+). It participates in cofactor biosynthesis; thiamine diphosphate biosynthesis; 4-methyl-5-(2-phosphoethyl)-thiazole from 5-(2-hydroxyethyl)-4-methylthiazole: step 1/1. In terms of biological role, catalyzes the phosphorylation of the hydroxyl group of 4-methyl-5-beta-hydroxyethylthiazole (THZ). This chain is Hydroxyethylthiazole kinase, found in Vibrio parahaemolyticus serotype O3:K6 (strain RIMD 2210633).